A 301-amino-acid chain; its full sequence is Homoserine O-acetyltransferase (301 aa).

Residue Cys-142 is the Acyl-thioester intermediate of the active site. Positions 163 and 192 each coordinate substrate. His-235 (proton acceptor) is an active-site residue. Glu-237 is an active-site residue. Residue Arg-249 coordinates substrate.

This sequence belongs to the MetA family. In terms of assembly, homodimer.

Its subcellular location is the cytoplasm. It carries out the reaction L-homoserine + acetyl-CoA = O-acetyl-L-homoserine + CoA. Its pathway is amino-acid biosynthesis; L-methionine biosynthesis via de novo pathway; O-acetyl-L-homoserine from L-homoserine: step 1/1. Functionally, transfers an acetyl group from acetyl-CoA to L-homoserine, forming acetyl-L-homoserine. Utilizes a ping-pong kinetic mechanism in which the acetyl group of acetyl-CoA is initially transferred to the enzyme to form an acetyl-enzyme intermediate before subsequent transfer to homoserine to form the final product, O-acetylhomoserine. Cannot use succinyl-CoA as the acyl donor. This chain is Homoserine O-acetyltransferase, found in Bacillus cereus (strain ATCC 10987 / NRS 248).